We begin with the raw amino-acid sequence, 285 residues long: MAAKIIDGKTIARQVRSEVAARVRQRLADGKRAPGLAVIMVGDDPASRIYVGSKQRACEEVGFLSRSYALPDSTDEAQLLALIDTLNADAAIDGILVQLPLPAGIDNSRVLERIHPDKDVDGFHPYNLGRLCQRTPKLRPCTPRGIITLLERCGIETQGMDAVMVGASNIVGRPMALELLLAGCTTTITHSRTRNLQQHVERADLIVAAVGKPGFIPGEWVKPGAVVIDVGINRLESGKVVGDVDFTGAAQRASWITPVPGGVGPMTVATLMQNTLQACEAFHDD.

NADP(+) is bound by residues 166–168 (GAS), S191, and I232.

This sequence belongs to the tetrahydrofolate dehydrogenase/cyclohydrolase family. Homodimer.

It catalyses the reaction (6R)-5,10-methylene-5,6,7,8-tetrahydrofolate + NADP(+) = (6R)-5,10-methenyltetrahydrofolate + NADPH. It carries out the reaction (6R)-5,10-methenyltetrahydrofolate + H2O = (6R)-10-formyltetrahydrofolate + H(+). It functions in the pathway one-carbon metabolism; tetrahydrofolate interconversion. Catalyzes the oxidation of 5,10-methylenetetrahydrofolate to 5,10-methenyltetrahydrofolate and then the hydrolysis of 5,10-methenyltetrahydrofolate to 10-formyltetrahydrofolate. This is Bifunctional protein FolD from Edwardsiella ictaluri (strain 93-146).